The following is a 202-amino-acid chain: MKALTVRQQEVFDLIRDHISQTGMPPTRAEIAQRLGFRSPNAAEEHLKALARKGVIEIVSGASRGIRLLQEEEEGLPLVGRVAAGEPLLAQQHIEGHYQVDPSLFKPNADFLLRVSGMSMKDIGIMDGDLLAVHKTQDVRNGQVVVARIDDEVTVKRLKKQGNKVELLPENSEFKPIVVDLRQQNFTIEGLAVGVIRNGDWL.

The segment at residues 28–48 (RAEIAQRLGFRSPNAAEEHLK) is a DNA-binding region (H-T-H motif). Active-site for autocatalytic cleavage activity residues include Ser119 and Lys156.

The protein belongs to the peptidase S24 family. As to quaternary structure, homodimer.

It carries out the reaction Hydrolysis of Ala-|-Gly bond in repressor LexA.. In terms of biological role, represses a number of genes involved in the response to DNA damage (SOS response), including recA and lexA. Binds to the 16 bp palindromic sequence 5'-CTGTATATATATACAG-3'. In the presence of single-stranded DNA, RecA interacts with LexA causing an autocatalytic cleavage which disrupts the DNA-binding part of LexA, leading to derepression of the SOS regulon and eventually DNA repair. The sequence is that of LexA repressor from Escherichia fergusonii (strain ATCC 35469 / DSM 13698 / CCUG 18766 / IAM 14443 / JCM 21226 / LMG 7866 / NBRC 102419 / NCTC 12128 / CDC 0568-73).